The chain runs to 36 residues: MTNLNLPSIFVPLVGLVFPAIAMASLFLHVQKNKIV.

The helical transmembrane segment at 8–28 threads the bilayer; that stretch reads SIFVPLVGLVFPAIAMASLFL.

Belongs to the PsaI family.

It localises to the plastid. Its subcellular location is the chloroplast thylakoid membrane. In terms of biological role, may help in the organization of the PsaL subunit. The chain is Photosystem I reaction center subunit VIII from Solanum bulbocastanum (Wild potato).